The following is a 431-amino-acid chain: Peptidase B (431 aa).

Residues lysine 196 and aspartate 201 each contribute to the Mn(2+) site. Lysine 208 is an active-site residue. The Mn(2+) site is built by aspartate 219, aspartate 278, and glutamate 280. The active site involves arginine 282.

Belongs to the peptidase M17 family. As to quaternary structure, homohexamer. It depends on Mn(2+) as a cofactor.

It is found in the cytoplasm. The enzyme catalyses Release of an N-terminal amino acid, Xaa, from a peptide or arylamide. Xaa is preferably Glu or Asp but may be other amino acids, including Leu, Met, His, Cys and Gln.. Probably plays an important role in intracellular peptide degradation. This Vibrio atlanticus (strain LGP32) (Vibrio splendidus (strain Mel32)) protein is Peptidase B.